The primary structure comprises 691 residues: Elongation factor G (691 aa).

The tr-type G domain occupies 8-282; that stretch reads ERVRNIGIAA…AVVDYLPAPV (275 aa). GTP-binding positions include 17–24, 81–85, and 135–138; these read AHIDAGKT, DTPGH, and NKMD.

This sequence belongs to the TRAFAC class translation factor GTPase superfamily. Classic translation factor GTPase family. EF-G/EF-2 subfamily.

It localises to the cytoplasm. Catalyzes the GTP-dependent ribosomal translocation step during translation elongation. During this step, the ribosome changes from the pre-translocational (PRE) to the post-translocational (POST) state as the newly formed A-site-bound peptidyl-tRNA and P-site-bound deacylated tRNA move to the P and E sites, respectively. Catalyzes the coordinated movement of the two tRNA molecules, the mRNA and conformational changes in the ribosome. In Prochlorococcus marinus (strain MIT 9515), this protein is Elongation factor G.